A 238-amino-acid chain; its full sequence is tRNA (guanine-N(1)-)-methyltransferase (238 aa).

S-adenosyl-L-methionine is bound by residues G109 and 129–134 (IGDFVL).

It belongs to the RNA methyltransferase TrmD family. In terms of assembly, homodimer.

It localises to the cytoplasm. The catalysed reaction is guanosine(37) in tRNA + S-adenosyl-L-methionine = N(1)-methylguanosine(37) in tRNA + S-adenosyl-L-homocysteine + H(+). Specifically methylates guanosine-37 in various tRNAs. This is tRNA (guanine-N(1)-)-methyltransferase from Exiguobacterium sp. (strain ATCC BAA-1283 / AT1b).